A 742-amino-acid polypeptide reads, in one-letter code: 5-methyltetrahydropteroyltriglutamate--homocysteine methyltransferase (742 aa).

5-methyltetrahydropteroyltri-L-glutamate contacts are provided by residues 18-21 (REWK) and lysine 112. Residues 420–422 (IGS) and glutamate 473 each bind L-homocysteine. L-methionine-binding positions include 420–422 (IGS) and glutamate 473. Tryptophan 550 contributes to the 5-methyltetrahydropteroyltri-L-glutamate binding site. Position 588 (aspartate 588) interacts with L-homocysteine. Aspartate 588 is a binding site for L-methionine. Glutamate 594 lines the 5-methyltetrahydropteroyltri-L-glutamate pocket. Zn(2+)-binding residues include histidine 630, cysteine 632, and glutamate 654. The active-site Proton donor is histidine 683. Residue cysteine 715 coordinates Zn(2+).

The protein belongs to the vitamin-B12 independent methionine synthase family. It depends on Zn(2+) as a cofactor.

The catalysed reaction is 5-methyltetrahydropteroyltri-L-glutamate + L-homocysteine = tetrahydropteroyltri-L-glutamate + L-methionine. The protein operates within amino-acid biosynthesis; L-methionine biosynthesis via de novo pathway; L-methionine from L-homocysteine (MetE route): step 1/1. Its function is as follows. Catalyzes the transfer of a methyl group from 5-methyltetrahydrofolate to homocysteine resulting in methionine formation. The chain is 5-methyltetrahydropteroyltriglutamate--homocysteine methyltransferase from Staphylococcus aureus (strain MRSA252).